The following is a 136-amino-acid chain: Preprocaerulein type I' (136 aa).

The signal sequence occupies residues 1–26 (MFKGILLCVLFAVLSANPLSQPEGFA). A propeptide spanning residues 27–136 (DEERDVRGLA…NALGGAPQQR (110 aa)) is cleaved from the precursor. Residues 82 to 101 (GAPQQREANDERRFADDEDD) form a disordered region.

Belongs to the gastrin/cholecystokinin family. Expressed by the skin glands.

The protein localises to the secreted. The pharmacological activities of caerulein are quite similar to the physiological activities of gastrin and related peptides. This Xenopus laevis (African clawed frog) protein is Preprocaerulein type I'.